Here is a 276-residue protein sequence, read N- to C-terminus: NAD-capped RNA hydrolase NudC (276 aa).

Position 82 (R82) interacts with substrate. Residues C112 and C115 each coordinate Zn(2+). A substrate-binding site is contributed by E125. Zn(2+) is bound by residues C130 and C133. Substrate is bound at residue Y138. Residues 139-262 (PRLSPSMIVL…SIARYLIELY (124 aa)) form the Nudix hydrolase domain. A divalent metal cation is bound by residues A172, E188, and E192. The Nudix box signature appears at 173-194 (GYVEPGESVEQCVAREVREEVG). 206 to 213 (QGWPFPHS) contacts substrate. E233 serves as a coordination point for a divalent metal cation. A255 lines the substrate pocket.

It belongs to the Nudix hydrolase family. NudC subfamily. Homodimer. It depends on Mg(2+) as a cofactor. Mn(2+) serves as cofactor. The cofactor is Zn(2+).

The catalysed reaction is a 5'-end NAD(+)-phospho-ribonucleoside in mRNA + H2O = a 5'-end phospho-adenosine-phospho-ribonucleoside in mRNA + beta-nicotinamide D-ribonucleotide + 2 H(+). It catalyses the reaction NAD(+) + H2O = beta-nicotinamide D-ribonucleotide + AMP + 2 H(+). The enzyme catalyses NADH + H2O = reduced beta-nicotinamide D-ribonucleotide + AMP + 2 H(+). Its function is as follows. mRNA decapping enzyme that specifically removes the nicotinamide adenine dinucleotide (NAD) cap from a subset of mRNAs by hydrolyzing the diphosphate linkage to produce nicotinamide mononucleotide (NMN) and 5' monophosphate mRNA. The NAD-cap is present at the 5'-end of some mRNAs and stabilizes RNA against 5'-processing. Has preference for mRNAs with a 5'-end purine. Catalyzes the hydrolysis of a broad range of dinucleotide pyrophosphates. This is NAD-capped RNA hydrolase NudC from Stutzerimonas stutzeri (strain A1501) (Pseudomonas stutzeri).